The primary structure comprises 421 residues: Trimethyllysine dioxygenase, mitochondrial (421 aa).

The N-terminal 15 residues, 1 to 15 (MWYHKLLHQQSRLRN), are a transit peptide targeting the mitochondrion. Residues lysine 179 and lysine 236 each carry the N6-acetyllysine modification. Fe cation contacts are provided by histidine 242, aspartate 244, and histidine 389.

This sequence belongs to the gamma-BBH/TMLD family. As to quaternary structure, homodimer. Fe(2+) serves as cofactor. Requires L-ascorbate as cofactor.

Its subcellular location is the mitochondrion matrix. The catalysed reaction is N(6),N(6),N(6)-trimethyl-L-lysine + 2-oxoglutarate + O2 = (3S)-3-hydroxy-N(6),N(6),N(6)-trimethyl-L-lysine + succinate + CO2. It participates in amine and polyamine biosynthesis; carnitine biosynthesis. In terms of biological role, converts trimethyllysine (TML) into hydroxytrimethyllysine (HTML). The protein is Trimethyllysine dioxygenase, mitochondrial (Tmlhe) of Mus musculus (Mouse).